Here is an 804-residue protein sequence, read N- to C-terminus: Phenylalanine--tRNA ligase beta subunit (804 aa).

The tRNA-binding domain maps to 38-148; the sequence is RSYLKGFVIA…EDVPIGASFA (111 aa). The B5 domain maps to 401–476; it reads PEIRQITFPL…RIYGLDKIKP (76 aa). Mg(2+) contacts are provided by Asp-454, Asp-460, Glu-463, and Glu-464. In terms of domain architecture, FDX-ACB spans 710-803; it reads SSLQMVRRDF…VTRMTGASLR (94 aa).

This sequence belongs to the phenylalanyl-tRNA synthetase beta subunit family. Type 1 subfamily. Tetramer of two alpha and two beta subunits. It depends on Mg(2+) as a cofactor.

It localises to the cytoplasm. It catalyses the reaction tRNA(Phe) + L-phenylalanine + ATP = L-phenylalanyl-tRNA(Phe) + AMP + diphosphate + H(+). The chain is Phenylalanine--tRNA ligase beta subunit from Bartonella henselae (strain ATCC 49882 / DSM 28221 / CCUG 30454 / Houston 1) (Rochalimaea henselae).